We begin with the raw amino-acid sequence, 1034 residues long: N-acetyl-beta-glucosaminyl-glycoprotein 4-beta-N-acetylgalactosaminyltransferase 1 (1034 aa).

Residues 1-12 lie on the Cytoplasmic side of the membrane; the sequence is MPWFPVKKVRKQ. A helical; Signal-anchor for type II membrane protein membrane pass occupies residues 13–31; that stretch reads MKLLLLLLLLTCAAWLTYV. Residues 32–1034 are Lumenal-facing; it reads HRSLVRPGRA…SRKGARAQRS (1003 aa). The disordered stretch occupies residues 51–104; sequence DGEKLTGVTDSRGVRVPSSTQRSEDSSESHEEEQAPEGRGPNMLFPGGPRKPPP. A compositionally biased stretch (basic and acidic residues) spans 72–83; that stretch reads RSEDSSESHEEE. A glycan (N-linked (GlcNAc...) asparagine) is linked at N106. Positions 109 to 279 constitute a PA14 domain; sequence HQTPPWREEF…LKFEIIDSAH (171 aa). Disordered stretches follow at residues 450–486 and 556–600; these read PTDA…DEQT and RVQL…QLHG. The span at 461–473 shows a compositional bias: low complexity; it reads TPTPAASTGTTAS. N-linked (GlcNAc...) asparagine glycosylation occurs at N611. 2 disordered regions span residues 626 to 669 and 782 to 801; these read SQVS…PLGR and GDED…HPDS. Residues 636 to 661 show a composition bias toward acidic residues; that stretch reads EGEEGEEDGAPGDEATSEDSEEEEEP.

Belongs to the chondroitin N-acetylgalactosaminyltransferase family.

Its subcellular location is the golgi apparatus. It localises to the golgi stack membrane. It carries out the reaction an N-acetyl-beta-D-glucosaminyl derivative + UDP-N-acetyl-alpha-D-galactosamine = an N-acetyl-beta-D-galactosaminyl-(1-&gt;4)-N-acetyl-beta-D-glucosaminyl derivative + UDP + H(+). In terms of biological role, transfers N-acetylgalactosamine (GalNAc) from UDP-GalNAc to N-acetylglucosamine-beta-benzyl with a beta-1,4-linkage to form N,N'-diacetyllactosediamine, GalNAc-beta-1,4-GlcNAc structures in N-linked glycans and probably O-linked glycans. The protein is N-acetyl-beta-glucosaminyl-glycoprotein 4-beta-N-acetylgalactosaminyltransferase 1 (B4galnt4) of Mus musculus (Mouse).